We begin with the raw amino-acid sequence, 1183 residues long: Probable RNA-dependent RNA polymerase 4 (1183 aa).

It belongs to the RdRP family. In terms of tissue distribution, expressed in shoot apical meristem (SAM) and panicles.

The catalysed reaction is RNA(n) + a ribonucleoside 5'-triphosphate = RNA(n+1) + diphosphate. Functionally, probably involved in the RNA silencing pathway and required for the generation of small interfering RNAs (siRNAs). The sequence is that of Probable RNA-dependent RNA polymerase 4 (RDR4) from Oryza sativa subsp. japonica (Rice).